Here is a 326-residue protein sequence, read N- to C-terminus: Protein LEG1 homolog (326 aa).

An N-terminal signal peptide occupies residues 1-22 (MKSNKTIFLILLFLINFNSIYS). N-linked (GlcNAc...) asparagine glycans are attached at residues N58, N85, N165, N226, and N245.

The protein belongs to the LEG1 family.

The protein localises to the secreted. This Dictyostelium discoideum (Social amoeba) protein is Protein LEG1 homolog.